Reading from the N-terminus, the 159-residue chain is UPF0262 protein CCNA_02430 (159 aa).

It belongs to the UPF0262 family.

This is UPF0262 protein CCNA_02430 from Caulobacter vibrioides (strain NA1000 / CB15N) (Caulobacter crescentus).